The sequence spans 1234 residues: DNA-directed RNA polymerase I subunit RPA2 (1234 aa).

A C4-type zinc finger spans residues 1119-1150 (CRQCGSFLSTQPTVSPFIGKRKAVSTVRCRNC).

It belongs to the RNA polymerase beta chain family. As to quaternary structure, component of the RNA polymerase I (Pol I) complex consisting of 14 subunits.

It localises to the nucleus. Its subcellular location is the nucleolus. The enzyme catalyses RNA(n) + a ribonucleoside 5'-triphosphate = RNA(n+1) + diphosphate. DNA-dependent RNA polymerase catalyzes the transcription of DNA into RNA using the four ribonucleoside triphosphates as substrates. Second largest core component of RNA polymerase I which synthesizes ribosomal RNA precursors. Proposed to contribute to the polymerase catalytic activity and forms the polymerase active center together with the largest subunit. Pol I is composed of mobile elements and RPA2 is part of the core element with the central large cleft and probably a clamp element that moves to open and close the cleft. This Neurospora crassa (strain ATCC 24698 / 74-OR23-1A / CBS 708.71 / DSM 1257 / FGSC 987) protein is DNA-directed RNA polymerase I subunit RPA2 (acr-2).